A 1308-amino-acid polypeptide reads, in one-letter code: Chromosome partition protein Smc (1308 aa).

34–41 (PNGCGKSN) lines the ATP pocket. Positions 115–181 (AAREASMEEV…VAEGQPSDAQ (67 aa)) are disordered. Over residues 137 to 169 (TEAEATEQQAAPSEGAAPTTEATAPSTENEAAP) the composition is skewed to low complexity. The stretch at 278 to 600 (ITKYKTKKRL…DTLRAEYATL (323 aa)) forms a coiled coil. The SMC hinge domain occupies 637 to 757 (AGVLADFLEV…VPDPAIGREL (121 aa)). 2 coiled-coil regions span residues 791–1046 (SLKR…ELHA) and 1110–1148 (MALE…EIDQ).

This sequence belongs to the SMC family. Homodimer.

The protein localises to the cytoplasm. In terms of biological role, required for chromosome condensation and partitioning. The protein is Chromosome partition protein Smc of Koribacter versatilis (strain Ellin345).